Here is a 581-residue protein sequence, read N- to C-terminus: MAASGRGLSRALHSTPCPAWKRVQSGANGCLKPEYDAVVIGAGHNGLVAAAYLQRLGVNTAVFERRHVIGGAAVTEEIIPGFKFSRASYLLSLLRPQIYTDLELKKHGLKLHLRNPYSFTPMLEEGTLSKPPRSLLLGTDVAENQKQISQFSRKDAQAFPRYEEFMKRLVLAIDPLLDAAPVDIAALQHGSLLQRLRALSTLRPLLKAGRTLGAQLPQYYEVLTAPISKVLDQWFESEPLKATLATDAVIGAMTSPHTPGSGYVLLHHVMGSLEGMQGAWSYVQGGMGALSDAIASSATAHGASIFTEKTVAKVQVNSEGRVQGVVLQGGEEVRSRVVLSCASPQVTFLELTPQEWLPGAFVKRISQLDTQSPVTKINVAVDRLPNFQAAPNAPGDQPQAHHQCSIHLNCEDTLLLHQAFEDAKGGLPSQRPMIELCIPSSLDPTLAPTGCHVVSLFTQYTPYTLAGGKVWDEQKKNTYADKVFDCIEAYAPGFKRSVLGRDILTPQDLERIFGLPGGNIFHGAMSLDQLYFARPVPQHSDYRCPVQGLYLCGSGAHPGGGVMGAAGRNAAHIVFRDLKNM.

V38–G71 is an FAD binding site.

It belongs to the carotenoid/retinoid oxidoreductase family. In terms of assembly, interacts with COX5B; this interaction may contribute to localize PYROXD2 to the inner face of the inner mitochondrial membrane.

The protein resides in the mitochondrion matrix. Probable oxidoreductase that may play a role as regulator of mitochondrial function. The sequence is that of Pyridine nucleotide-disulfide oxidoreductase domain-containing protein 2 from Rattus norvegicus (Rat).